Reading from the N-terminus, the 422-residue chain is Cyclin-A2 (422 aa).

M1 bears the N-acetylmethionine mark. Residues 1-62 (MPGTSRHSGR…APQQKLKTRR (62 aa)) form a disordered region. Residue S5 is modified to Phosphoserine.

This sequence belongs to the cyclin family. Cyclin AB subfamily. Interacts with the CDK1 and CDK2 protein kinases to form serine/threonine kinase holoenzyme complexes. Interacts with CDK1 (hyperphosphorylated form in G1 and underphosphorylated forms in S and G2). Interacts with CDK2; the interaction increases from G1 to G2. Interacts (associated with CDK2 but not with CDK1) with SCAPER; regulates the activity of CCNA2/CDK2 by transiently maintaining CCNA2 in the cytoplasm. Forms a ternary complex with CDK2 and CDKN1B; CDKN1B inhibits the kinase activity of CDK2 through conformational rearrangements. Interacts with INCA1. In terms of assembly, (Microbial infection) Interacts with mouse cytomegalovirus/MCMV kinase M97; this interaction sequesters CCNA2 to the cytoplasm. In terms of processing, polyubiquitinated via 'Lys-11'-linked ubiquitin by the anaphase-promoting complex (APC/C), leading to its degradation by the proteasome. Deubiquitinated and stabilized by USP37 enables entry into S phase. Ubiquitinated during the G1 phase by the SCF(FBXO31) complex, leading to its proteasomal degradation. As to expression, ubiquitous. In the testis, expressed in germ cells and in the ovary, in both germline and somatic cells.

The protein localises to the nucleus. Its subcellular location is the cytoplasm. Functionally, cyclin which controls both the G1/S and the G2/M transition phases of the cell cycle. Functions through the formation of specific serine/threonine kinase holoenzyme complexes with the cyclin-dependent protein kinases CDK1 and CDK2. The cyclin subunit confers the substrate specificity of these complexes and differentially interacts with and activates CDK1 and CDK2 throughout the cell cycle. The chain is Cyclin-A2 from Mus musculus (Mouse).